A 187-amino-acid chain; its full sequence is UPF0301 protein Shewmr7_1270 (187 aa).

This sequence belongs to the UPF0301 (AlgH) family.

The polypeptide is UPF0301 protein Shewmr7_1270 (Shewanella sp. (strain MR-7)).